The following is a 593-amino-acid chain: Mitoguardin 2 (593 aa).

The next 2 helical transmembrane spans lie at 11–31 (MIQALAMTVAEIPVFLYTTFG) and 42–62 (PGLRKVLFATALGTVALALAA). Disordered regions lie at residues 101 to 134 (KKGYSNRRVQSPSSKSNDTLSGISSIEPSKHSGS) and 195 to 228 (LSVGQRGDSGSTPTPGDGLRNPETASEALSEPES). The span at 107–123 (RRVQSPSSKSNDTLSGI) shows a compositional bias: polar residues. The span at 124–134 (SSIEPSKHSGS) shows a compositional bias: low complexity. The residue at position 132 (S132) is a Phosphoserine. T206 bears the Phosphothreonine mark. Residues S220, S224, and S228 each carry the phosphoserine modification. T273 is modified (phosphothreonine). Phosphoserine occurs at positions 276 and 295. The FFAT motif lies at 292–298 (SFFSATE). The chain crosses the membrane as a helical span at residues 563 to 583 (ILLGYLGVPAASSIGLNGVLP).

This sequence belongs to the mitoguardin family. Homodimer and heterodimer; forms heterodimers with MIGA1. Interacts with PLD6/MitoPLD. Interacts (via phosphorylated FFAT motif) with MOSPD2. In terms of processing, phosphorylation at Ser-295 of the FFAT motif activates interaction with MOSPD2.

It is found in the mitochondrion outer membrane. Functionally, regulator of mitochondrial fusion: acts by forming homo- and heterodimers at the mitochondrial outer membrane and facilitating the formation of PLD6/MitoPLD dimers. May act by regulating phospholipid metabolism via PLD6/MitoPLD. The chain is Mitoguardin 2 from Bos taurus (Bovine).